A 152-amino-acid polypeptide reads, in one-letter code: Endoribonuclease YbeY (152 aa).

His113, His117, and His123 together coordinate Zn(2+).

This sequence belongs to the endoribonuclease YbeY family. The cofactor is Zn(2+).

The protein localises to the cytoplasm. Functionally, single strand-specific metallo-endoribonuclease involved in late-stage 70S ribosome quality control and in maturation of the 3' terminus of the 16S rRNA. The sequence is that of Endoribonuclease YbeY from Pseudoalteromonas atlantica (strain T6c / ATCC BAA-1087).